The primary structure comprises 701 residues: Polyribonucleotide nucleotidyltransferase (701 aa).

Mg(2+)-binding residues include Asp-487 and Asp-493. The KH domain maps to 554 to 613 (PTMIAMKIDTDKIRDVIGKGGATIRAICEETKASIDIEDDGSIKIFGETKEAADAAKQRI). The S1 motif domain maps to 623–691 (GKIYVGKVER…NRGRIKLSIK (69 aa)).

The protein belongs to the polyribonucleotide nucleotidyltransferase family. In terms of assembly, component of the RNA degradosome, which is a multiprotein complex involved in RNA processing and mRNA degradation. Mg(2+) is required as a cofactor.

It localises to the cytoplasm. The catalysed reaction is RNA(n+1) + phosphate = RNA(n) + a ribonucleoside 5'-diphosphate. Involved in mRNA degradation. Catalyzes the phosphorolysis of single-stranded polyribonucleotides processively in the 3'- to 5'-direction. The chain is Polyribonucleotide nucleotidyltransferase from Pseudomonas putida (strain ATCC 47054 / DSM 6125 / CFBP 8728 / NCIMB 11950 / KT2440).